A 385-amino-acid chain; its full sequence is Heptahelical transmembrane protein 4 (385 aa).

Residues M1–K12 show a composition bias toward basic and acidic residues. The tract at residues M1 to K22 is disordered. Residues M1–T79 are Cytoplasmic-facing. Residues L80–A100 traverse the membrane as a helical segment. The Extracellular segment spans residues T101 to P191. Residues F192 to L212 form a helical membrane-spanning segment. Residues S213–Y228 are Cytoplasmic-facing. The helical transmembrane segment at A229–C249 threads the bilayer. The Extracellular portion of the chain corresponds to D250–L256. A helical membrane pass occupies residues Y257 to F277. Residues Q278–S288 are Cytoplasmic-facing. The helical transmembrane segment at L289–W309 threads the bilayer. At D310 to E313 the chain is on the extracellular side. A helical transmembrane segment spans residues A314 to V334. Residues Y335–Q356 lie on the Cytoplasmic side of the membrane. A helical transmembrane segment spans residues L357–L377.

The protein belongs to the ADIPOR family. In terms of tissue distribution, expressed in roots, leaves, stems and flowers.

Its subcellular location is the membrane. Functionally, may play a role in abiotic stress response. The sequence is that of Heptahelical transmembrane protein 4 (HHP4) from Arabidopsis thaliana (Mouse-ear cress).